The primary structure comprises 141 residues: Galactose-6-phosphate isomerase subunit LacA (141 aa).

This sequence belongs to the LacAB/RpiB family. As to quaternary structure, heteromultimeric protein consisting of LacA and LacB.

It carries out the reaction aldehydo-D-galactose 6-phosphate = keto-D-tagatose 6-phosphate. Its pathway is carbohydrate metabolism; D-galactose 6-phosphate degradation; D-tagatose 6-phosphate from D-galactose 6-phosphate: step 1/1. In Streptococcus equi subsp. zooepidemicus (strain MGCS10565), this protein is Galactose-6-phosphate isomerase subunit LacA.